Consider the following 403-residue polypeptide: GPI-N-acetylgalactosamine transferase PGAP4 (403 aa).

Residues 1 to 22 (MTTSTSPAAMLLRRLRRLSWGS) are Cytoplasmic-facing. A helical membrane pass occupies residues 23–43 (TAVQLFILTVVTFGLLAPLAC). At 44–264 (HRLLHSYFYL…INPEPMRILE (221 aa)) the chain is on the lumenal side. Valine 109 provides a ligand contact to UDP-N-acetyl-alpha-D-galactosamine. Disulfide bonds link cysteine 132-cysteine 136 and cysteine 144-cysteine 194. Residues 211–213 (EDD) carry the DXD motif motif. Residues 265–285 (WVGVGMLLGPVLTWIYMRFAC) traverse the membrane as a helical segment. Residues 286-287 (RP) lie on the Cytoplasmic side of the membrane. The chain crosses the membrane as a helical span at residues 288-308 (GFSWPVMLFFCLYSMGLVELV). Topologically, residues 309 to 403 (GRHYFLELRR…LRYNFHPSLL (95 aa)) are lumenal. A disulfide bridge links cysteine 332 with cysteine 333. The UDP-N-acetyl-alpha-D-galactosamine site is built by threonine 334, proline 335, and lysine 362.

Belongs to the PGAP4 family. In terms of processing, glycosylated.

Its subcellular location is the golgi apparatus membrane. Its function is as follows. Golgi-resident glycosylphosphatidylinositol (GPI)-N-acetylgalactosamine transferase that catalyzes the N-acetyl-beta-D-galactosamine transfer from an UDP-N-acetyl-alpha-D-galactosamine to the 4-OH-position of first mannose of the glycosylphosphatidylinositol (GPI) of a GPI-anchored protein (GPI-AP). This modification occurs after the fatty acid remodeling step of the GPI-anchor maturation. This chain is GPI-N-acetylgalactosamine transferase PGAP4, found in Mus musculus (Mouse).